The chain runs to 2647 residues: Filamin-A (2647 aa).

The span at 1-15 (MSSSHSRAGQSAAGA) shows a compositional bias: low complexity. Positions 1 to 39 (MSSSHSRAGQSAAGAAPGGGVDTRDAEMPATEKDLAEDA) are disordered. Ser2 carries the N-acetylserine modification. Residues 2-274 (SSSHSRAGQS…PKAKLKPGAP (273 aa)) form an actin-binding region. Position 11 is a phosphoserine (Ser11). A compositionally biased stretch (basic and acidic residues) spans 22–39 (DTRDAEMPATEKDLAEDA). Residues Lys42, Lys43, and Lys135 each participate in a glycyl lysine isopeptide (Lys-Gly) (interchain with G-Cter in ubiquitin) cross-link. 2 consecutive Calponin-homology (CH) domains span residues 43 to 149 (KIQQ…LHYS) and 166 to 269 (QTPK…KAKL). Residues 271 to 294 (PGAPLRPKLNPKKARAYGPGIEPT) are disordered. Filamin repeat units follow at residues 276–374 (RPKL…EVYV), 376–474 (KSQG…TVTV), 475–570 (GQAC…EVKV), 571–663 (GTEC…MADI), 667–763 (PQDF…RVNV), 764–866 (GAGS…RVKV), 867–965 (EPSH…SVAV), 966–1061 (SPSL…PLEA), 1062–1154 (VAPT…KAHV), 1155–1249 (VPCF…KLQV), 1250–1349 (EPAV…QVPV), 1350–1442 (TEGC…KVPV), 1443–1539 (HDVT…KVKV), 1540–1636 (LPTH…RVRA), and 1649–1740 (VSIG…QVTA). A Glycyl lysine isopeptide (Lys-Gly) (interchain with G-Cter in SUMO1); alternate cross-link involves residue Lys299. Lys299 participates in a covalent cross-link: Glycyl lysine isopeptide (Lys-Gly) (interchain with G-Cter in SUMO2); alternate. 2 positions are modified to N6-acetyllysine: Lys376 and Lys508. N6-acetyllysine occurs at positions 700, 781, 837, 865, and 906. A phosphoserine mark is found at Ser968 and Ser1055. Lys1071 carries the post-translational modification N6-acetyllysine; alternate. Lys1071 is subject to N6-succinyllysine; alternate. Phosphoserine occurs at positions 1081 and 1084. Thr1089 carries the phosphothreonine modification. Ser1301 and Ser1338 each carry phosphoserine. The interval 1361–1382 (HGPGIQSGTTNKPNKFTVETRG) is disordered. The residue at position 1372 (Lys1372) is an N6-acetyllysine. Phosphoserine occurs at positions 1459 and 1533. Residues 1490–1607 (PKGLVEPVDV…DNHDGTYTVA (118 aa)) form an interaction with furin region. The residue at position 1538 (Lys1538) is an N6-acetyllysine. Residues Ser1630 and Ser1734 each carry the phosphoserine modification. The segment at 1741 to 1778 (LAGDQPSVQPPLRSQQLAPQYTYAQGGQQTWAPERPLV) is hinge 1. Filamin repeat units follow at residues 1779-1860 (GVNG…QFYV), 1861-1950 (DYVN…PFTA), 1951-2039 (RVTG…PVVI), 2042-2131 (SEIG…SPFS), 2132-2230 (VKVT…QFTV), 2233-2325 (LGEG…VVPV), 2327-2420 (SPSG…KIRV), and 2424-2516 (GHGG…KAKV). At Ser1835 the chain carries Phosphoserine. Ser1967, Ser2053, Ser2128, Ser2152, Ser2158, Ser2163, Ser2180, Ser2284, Ser2327, and Ser2329 each carry phosphoserine. Thr2336 carries the phosphothreonine modification. Ser2338, Ser2370, Ser2414, Ser2510, Ser2523, and Ser2526 each carry phosphoserine. The hinge 2 stretch occupies residues 2517 to 2551 (TGPRLVSNHSLHETSSVFVDSLTKATCAPQHGAPG). The self-association site, tail stretch occupies residues 2517-2647 (TGPRLVSNHS…PGSPYRVVVP (131 aa)). The Filamin 24 repeat unit spans residues 2552–2646 (PGPADASKVV…IPGSPYRVVV (95 aa)). Lys2569 is subject to N6-acetyllysine; alternate. Lys2569 is modified (N6-succinyllysine; alternate). The residue at position 2575 (Lys2575) is an N6-acetyllysine. Position 2599 is a phosphothreonine (Thr2599). An N6-acetyllysine mark is found at Lys2607 and Lys2621.

The protein belongs to the filamin family. Homodimer. Interacts with PDLIM2. Interacts with RFLNA and RFLNB. Interacts with FCGR1A, FLNB, FURIN, HSPB7, INPPL1, KCND2, MYOT, MYOZ1, ARHGAP24, PSEN1, PSEN2 and ECSCR. Also interacts with various other binding partners in addition to filamentous actin. Interacts (via N-terminus) with MIS18BP1 (via N-terminus). Interacts (via N-terminus) with TAF1B. Interacts with TMEM67 (via C-terminus) and MKS1. Interacts (via actin-binding domain) with MICALL2 (via CH domain). Interacts (via filamin repeat 5) with SYK; docks SYK to the plasma membrane. Interacts (via filamin repeats 19 and 21) with DRD3; increased PKA-mediated phosphorylation at Ser-2152. Interacts (via filamin repeat 21) with MAS1, AGTR1 and ADRA1D; increases PKA-mediated phosphorylation of FLNA at Ser-2152. Interacts (via filamin repeats 4, 9, 12, 17, 19, 21, and 23) with GP1BA (high affinity), ITGB7, ITGB2 and FBLIM1. Interacts with CEACAM1 (via cytoplasmic domain); inhibits cell migration and cell scattering by interfering with the interaction between FLNA and RALA. Interacts with FOXC1. Interacts (via calponin-homology (CH) domain 1 and filamin repeat 24) with CRMP1; the interaction alters FLNA ternary structure and thus promotes FLNA dissociation from F-actin. Interacts with DPYSL3/CRMP3 and DPYSL4/CRMP4. In terms of assembly, interacts with integrin ITGB1 isoform 1/beta-1A and isoform 5/beta-1D. Interacts with LUZP1; the interaction is not necessary for colocalization of LUZP1 with F-actin. In terms of processing, phosphorylation at Ser-2152 is negatively regulated by the autoinhibited conformation of filamin repeats 19-21. Ligand binding induces a conformational switch triggering phosphorylation at Ser-2152 by PKA. Post-translationally, phosphorylation extent changes in response to cell activation. Polyubiquitination in the CH1 domain by a SCF-like complex containing ASB2 leads to proteasomal degradation. Prior dissociation from actin may be required to expose the target lysines. Ubiquitinated in endothelial cells by RNF213 downstream of the non-canonical Wnt signaling pathway, leading to its degradation by the proteasome. Ubiquitous.

Its subcellular location is the cytoplasm. The protein resides in the cell cortex. The protein localises to the cytoskeleton. It is found in the perikaryon. It localises to the cell projection. Its subcellular location is the growth cone. The protein resides in the podosome. Promotes orthogonal branching of actin filaments and links actin filaments to membrane glycoproteins. Anchors various transmembrane proteins to the actin cytoskeleton and serves as a scaffold for a wide range of cytoplasmic signaling proteins. Interaction with FLNB may allow neuroblast migration from the ventricular zone into the cortical plate. Tethers cell surface-localized furin, modulates its rate of internalization and directs its intracellular trafficking. Involved in ciliogenesis. Plays a role in cell-cell contacts and adherens junctions during the development of blood vessels, heart and brain organs. Plays a role in platelets morphology through interaction with SYK that regulates ITAM- and ITAM-like-containing receptor signaling, resulting in by platelet cytoskeleton organization maintenance. During the axon guidance process, required for growth cone collapse induced by SEMA3A-mediated stimulation of neurons. This Homo sapiens (Human) protein is Filamin-A (FLNA).